We begin with the raw amino-acid sequence, 274 residues long: Large ribosomal subunit protein uL2 (274 aa).

Disordered regions lie at residues A28–K59 and G222–K274. Residues K39 to I49 show a composition bias toward polar residues. The segment covering D229–S239 has biased composition (basic and acidic residues).

Belongs to the universal ribosomal protein uL2 family. As to quaternary structure, part of the 50S ribosomal subunit. Forms a bridge to the 30S subunit in the 70S ribosome.

Functionally, one of the primary rRNA binding proteins. Required for association of the 30S and 50S subunits to form the 70S ribosome, for tRNA binding and peptide bond formation. It has been suggested to have peptidyltransferase activity; this is somewhat controversial. Makes several contacts with the 16S rRNA in the 70S ribosome. This chain is Large ribosomal subunit protein uL2, found in Marinomonas sp. (strain MWYL1).